The primary structure comprises 457 residues: Hydrogenobyrinate a,c-diamide synthase (457 aa).

A GATase cobBQ-type domain is found at 255–441; the sequence is TVAIAAGRAF…LHTHPAATPG (187 aa). Cys-337 functions as the Nucleophile in the catalytic mechanism.

This sequence belongs to the CobB/CbiA family. The cofactor is Mg(2+).

It catalyses the reaction hydrogenobyrinate + 2 L-glutamine + 2 ATP + 2 H2O = hydrogenobyrinate a,c-diamide + 2 L-glutamate + 2 ADP + 2 phosphate + 2 H(+). It participates in cofactor biosynthesis; adenosylcobalamin biosynthesis; cob(II)yrinate a,c-diamide from precorrin-2 (aerobic route): step 9/10. Its function is as follows. Catalyzes the ATP-dependent amidation of the two carboxylate groups at positions a and c of hydrogenobyrinate, using either L-glutamine or ammonia as the nitrogen source. In Mycobacterium bovis (strain ATCC BAA-935 / AF2122/97), this protein is Hydrogenobyrinate a,c-diamide synthase.